Consider the following 295-residue polypeptide: MNIQEMILTLQKHWSNEGCVLLQSYDVEKGAGTMSPYTFLRSLGPEPWKVAYVEPSRRPADGRYGDNPNRLYQHHQFQVIIKPSPDNIQELYLDSLKALGIDPLEHDIRFVEDNWENPSLGCAGLGWEVWLDGMEITQFTYFQQVGGLECKPVSVEITYGIERLASYIQDKENVFDLEWTNGYTIKDLFKMAEYEHSVYTFETSDVDMLFELFATYEKEANRQMDQGLVHPAYDYVLKCSHTFNLLDAKGAISVTERTGYIARVRNLARKVAKTYYDEREKLGFPMLKEEEASHE.

It belongs to the class-II aminoacyl-tRNA synthetase family. Tetramer of two alpha and two beta subunits.

It is found in the cytoplasm. It catalyses the reaction tRNA(Gly) + glycine + ATP = glycyl-tRNA(Gly) + AMP + diphosphate. This chain is Glycine--tRNA ligase alpha subunit, found in Bacillus licheniformis (strain ATCC 14580 / DSM 13 / JCM 2505 / CCUG 7422 / NBRC 12200 / NCIMB 9375 / NCTC 10341 / NRRL NRS-1264 / Gibson 46).